A 466-amino-acid chain; its full sequence is MSDEFDAVVGKVRARASPTDDERAQLQRVADAVMADAEAAIADLPVEAEVVQVGSTARGTWTAGDRDVDVFVCFPPSIDREALEEYGLAVGHDVLPDGREEYAEHPYVVGEREGYAVDLVPCYAVENATEIQSAVDRTPFHTRYLQERLDDNSAAEVRVAKQFLKGIGVYGSDLRTRGFSGYLTELLVLEFGGFRAFLEAVADWHPPVRLDPDDHGSETFDDPLVVIDPTDPERNVAAVLSETNVATLQHYARDLLAEPRVSLFTEDDPCPFEAADVEAAVSQRGTTPVALRFAAPDVVDDQLWPQLRKSLDGLCSELDRRGFEVLRSAAFVEDDSGKPETLDTESRGRDVVLLLEFAVAEQPAVERHEGPPVHVREHASGFFQKYDDNSEVAGPFIDGDRYVVERQRAFTTATGFLSSAAVYDVGLGQRIESALENGYEVLVGTDIAALADGFGVDLASYFDPKP.

ATP-binding residues include Ser55 and Arg58. Residues Ser55 and Arg58 each coordinate CTP. Residues Asp67, Asp69, and Asp118 each contribute to the Mg(2+) site. Residues His141, Lys161, and Tyr170 each contribute to the ATP site. 3 residues coordinate CTP: His141, Lys161, and Tyr170.

This sequence belongs to the tRNA nucleotidyltransferase/poly(A) polymerase family. Archaeal CCA-adding enzyme subfamily. In terms of assembly, homodimer. Requires Mg(2+) as cofactor.

The catalysed reaction is a tRNA precursor + 2 CTP + ATP = a tRNA with a 3' CCA end + 3 diphosphate. It catalyses the reaction a tRNA with a 3' CCA end + 2 CTP + ATP = a tRNA with a 3' CCACCA end + 3 diphosphate. In terms of biological role, catalyzes the addition and repair of the essential 3'-terminal CCA sequence in tRNAs without using a nucleic acid template. Adds these three nucleotides in the order of C, C, and A to the tRNA nucleotide-73, using CTP and ATP as substrates and producing inorganic pyrophosphate. tRNA 3'-terminal CCA addition is required both for tRNA processing and repair. Also involved in tRNA surveillance by mediating tandem CCA addition to generate a CCACCA at the 3' terminus of unstable tRNAs. While stable tRNAs receive only 3'-terminal CCA, unstable tRNAs are marked with CCACCA and rapidly degraded. In Haloarcula marismortui (strain ATCC 43049 / DSM 3752 / JCM 8966 / VKM B-1809) (Halobacterium marismortui), this protein is CCA-adding enzyme.